Reading from the N-terminus, the 570-residue chain is Adenine deaminase (570 aa).

It belongs to the metallo-dependent hydrolases superfamily. Adenine deaminase family. It depends on Mn(2+) as a cofactor.

The catalysed reaction is adenine + H2O + H(+) = hypoxanthine + NH4(+). This chain is Adenine deaminase, found in Clostridium acetobutylicum (strain ATCC 824 / DSM 792 / JCM 1419 / IAM 19013 / LMG 5710 / NBRC 13948 / NRRL B-527 / VKM B-1787 / 2291 / W).